Reading from the N-terminus, the 625-residue chain is 1,4-alpha-glucan branching enzyme GlgB (625 aa).

Catalysis depends on aspartate 302, which acts as the Nucleophile. Catalysis depends on glutamate 355, which acts as the Proton donor.

Belongs to the glycosyl hydrolase 13 family. GlgB subfamily. In terms of assembly, monomer.

It catalyses the reaction Transfers a segment of a (1-&gt;4)-alpha-D-glucan chain to a primary hydroxy group in a similar glucan chain.. It participates in glycan biosynthesis; glycogen biosynthesis. Functionally, catalyzes the formation of the alpha-1,6-glucosidic linkages in glycogen by scission of a 1,4-alpha-linked oligosaccharide from growing alpha-1,4-glucan chains and the subsequent attachment of the oligosaccharide to the alpha-1,6 position. This is 1,4-alpha-glucan branching enzyme GlgB from Albidiferax ferrireducens (strain ATCC BAA-621 / DSM 15236 / T118) (Rhodoferax ferrireducens).